The sequence spans 324 residues: Transcriptional regulator protein Pur-beta (324 aa).

Residues 1–47 are disordered; that stretch reads MADGDSGSERGGGGGGGGGPGGFQPAPRGGGGGGGGPGGEQETQELA. Ala2 is modified (N-acetylalanine). Phosphoserine is present on residues Ser6 and Ser8. Positions 9 to 39 are enriched in gly residues; it reads ERGGGGGGGGGPGGFQPAPRGGGGGGGGPGG. At Arg28 the chain carries Omega-N-methylarginine. Positions 37–263 are DNA-binding; it reads PGGEQETQEL…GVFLRVSEVK (227 aa). A Phosphothreonine modification is found at Thr43. At Ser113 the chain carries Phosphoserine. Arg164 carries the omega-N-methylarginine modification. An N6-acetyllysine modification is found at Lys279. Over residues 297-307 the composition is skewed to basic and acidic residues; the sequence is RQRDKLYERRG. Residues 297–324 form a disordered region; sequence RQRDKLYERRGGGSGGGDESEGEEVDED. Residue Arg306 is modified to Omega-N-methylarginine. 2 positions are modified to phosphoserine: Ser310 and Ser316. Residues 314–324 are compositionally biased toward acidic residues; it reads DESEGEEVDED.

The protein belongs to the PUR DNA-binding protein family. As to quaternary structure, homodimer, heterodimer with PURA and heterotrimer with PURA and YBX1/Y-box protein 1. Interacts with MYOCD and SRF.

The protein resides in the nucleus. Its function is as follows. Transcriptional regulator which can act as an activator or a repressor. Represses the transcription of ACTA2 in fibroblasts and smooth muscle cells via its ability to interact with the purine-rich strand of a MCAT-containing element in the 5' flanking region of the gene. Represses the transcription of MYOCD, capable of repressing all isoforms of MYOCD but the magnitude of the repressive effects is most notable for the SMC-specific isoforms. Promotes hepatic glucose production by activating the transcription of ADCY6, leading to cAMP accumulation, increased PKA activity, CREB activation, and increased transcription of PCK1 and G6PC genes. Has capacity to bind repeated elements in single-stranded DNA such as the purine-rich single strand of the PUR element located upstream of the MYC gene. Participates in transcriptional and translational regulation of alpha-MHC expression in cardiac myocytes by binding to the purine-rich negative regulatory (PNR) element. Modulates constitutive liver galectin-3 gene transcription by binding to its promoter. May play a role in the dendritic transport of a subset of mRNAs. The chain is Transcriptional regulator protein Pur-beta (Purb) from Mus musculus (Mouse).